A 449-amino-acid polypeptide reads, in one-letter code: Probable glycine dehydrogenase (decarboxylating) subunit 1 (449 aa).

Belongs to the GcvP family. N-terminal subunit subfamily. As to quaternary structure, the glycine cleavage system is composed of four proteins: P, T, L and H. In this organism, the P 'protein' is a heterodimer of two subunits.

It carries out the reaction N(6)-[(R)-lipoyl]-L-lysyl-[glycine-cleavage complex H protein] + glycine + H(+) = N(6)-[(R)-S(8)-aminomethyldihydrolipoyl]-L-lysyl-[glycine-cleavage complex H protein] + CO2. The glycine cleavage system catalyzes the degradation of glycine. The P protein binds the alpha-amino group of glycine through its pyridoxal phosphate cofactor; CO(2) is released and the remaining methylamine moiety is then transferred to the lipoamide cofactor of the H protein. The sequence is that of Probable glycine dehydrogenase (decarboxylating) subunit 1 from Sulfurisphaera tokodaii (strain DSM 16993 / JCM 10545 / NBRC 100140 / 7) (Sulfolobus tokodaii).